The sequence spans 246 residues: Allergin-1 (246 aa).

Residues 1 to 33 (MGDGDSPMCLSAVSFKGIRCWLDKLLLWALTIS) form the signal peptide. At 34–150 (ITLQNAAVDC…DESCPSCRLS (117 aa)) the chain is on the extracellular side. Residues 52-131 (PSPNLNSSMN…VNVSNLMKYS (80 aa)) form the Ig-like C2-type domain. N-linked (GlcNAc...) asparagine glycosylation is present at N68. An intrachain disulfide couples C73 to C120. Residues 151–171 (LLLPGLLLGILVIVLVLAYLI) form a helical membrane-spanning segment. Residues 172–246 (HLKYKKGKKT…ADYIYSELTH (75 aa)) lie on the Cytoplasmic side of the membrane. 2 consecutive short sequence motifs (ITIM motif) follow at residues 214-219 (IHYATP) and 239-244 (YIYSEL). A phosphotyrosine mark is found at Y216 and Y241.

Monomer. Interacts (tyrosine-phosphorylated) with PTPN6, PTPN11 and INPP5D. Post-translationally, N-glycosylated. In terms of tissue distribution, expressed in myeloid cells (dendritic cells, macrophages and neutrophils but not in T-cells, B-cells or natural killer cells) and mast cells (at protein level).

The protein resides in the cell membrane. It is found in the secreted. Functionally, immunoglobulin-like receptor which plays an inhibitory role in degranulation of mast cells. Negatively regulates IgE-mediated mast cell activation and suppresses the type I immediate hypersensitivity reaction. This chain is Allergin-1 (Milr1), found in Mus musculus (Mouse).